The sequence spans 198 residues: MNRFFKIVLTSTRRASTNGSGKRKTPFEGDKVHIPDEPYNSKVRFFICFKKKLKHGIQIDESLLSEMPPIDAKLISHLERLSLVRFDSEQAVANLRNSIRMAKRLELVDVEDVEPMHTVWESQECPTFDDVEEEPLPIDKVFRNAAVRFDDFFVTPPGNVPLESNERFDLNVINKWDTIGKPVAPEAKTIRLAEGRRK.

Belongs to the GatC family. Subunit of the heterotrimeric GatCAB amidotransferase (AdT) complex, composed of A, B and C subunits.

It is found in the mitochondrion. It carries out the reaction L-glutamyl-tRNA(Gln) + L-glutamine + ATP + H2O = L-glutaminyl-tRNA(Gln) + L-glutamate + ADP + phosphate + H(+). In terms of biological role, allows the formation of correctly charged Gln-tRNA(Gln) through the transamidation of misacylated Glu-tRNA(Gln) in the mitochondria. The reaction takes place in the presence of glutamine and ATP through an activated gamma-phospho-Glu-tRNA(Gln). In Caenorhabditis remanei (Caenorhabditis vulgaris), this protein is Glutamyl-tRNA(Gln) amidotransferase subunit C, mitochondrial.